Reading from the N-terminus, the 357-residue chain is D-amino-acid oxidase (357 aa).

Residues alanine 13, glycine 14, serine 42, glycine 47, arginine 289, glycine 315, and glycine 318 each coordinate FAD. Arginine 289 is a binding site for D-proline. Residue arginine 289 participates in D-serine binding.

The protein belongs to the DAMOX/DASOX family. The cofactor is FAD.

The protein resides in the cytoplasm. It localises to the secreted. Its subcellular location is the cell wall. The enzyme catalyses a D-alpha-amino acid + O2 + H2O = a 2-oxocarboxylate + H2O2 + NH4(+). It carries out the reaction D-phenylalanine + O2 + H2O = 3-phenylpyruvate + H2O2 + NH4(+). The catalysed reaction is D-lysine + O2 + H2O = 6-amino-2-oxohexanoate + H2O2 + NH4(+). It catalyses the reaction D-methionine + O2 + H2O = 4-methylsulfanyl-2-oxobutanoate + H2O2 + NH4(+). The enzyme catalyses D-arginine + O2 + H2O = 5-guanidino-2-oxopentanoate + H2O2 + NH4(+). It carries out the reaction D-ornithine + O2 + H2O = 5-amino-2-oxopentanoate + H2O2 + NH4(+). The catalysed reaction is D-leucine + O2 + H2O = 4-methyl-2-oxopentanoate + H2O2 + NH4(+). It catalyses the reaction D-histidine + O2 + H2O = 3-(imidazol-5-yl)pyruvate + H2O2 + NH4(+). Activated by manganese, copper, and iron ions. Inhibited by barium, aluminum, and zinc ions. Its function is as follows. Catalyzes the oxidative deamination of D-amino acids with broad substrate specificity. In Unknown prokaryotic organism, this protein is D-amino-acid oxidase.